Here is a 193-residue protein sequence, read N- to C-terminus: Transcriptional regulator RamR (193 aa).

The HTH tetR-type domain occupies 7 to 66 (EDKKQALLEAATQAIAQSGIAASTAVIARNAGVAEGTLFRYFATKDELINTLYLHLKQDL). The segment at residues 29–48 (STAVIARNAGVAEGTLFRYF) is a DNA-binding region (H-T-H motif).

Homodimer. May bind DNA either as a homodimer or as a pair of homodimers. Various chemicals reduce DNA-binding in vitro, including bile acids, such as cholic and chenodeoxycholic acids, and antimicrobial drugs, such as berberine, crystal violet, dequalinium, ethidium bromide and rhodamine 6G. Binds small regulatory RNA StyR3.

Transcriptional regulator. Represses the transcription of the transcriptional activator RamA and, thereby, leads to repression of the expression of the efflux pump subunits AcrA and AcrB, and TolC. Acts by binding directly to the promoter region of the ramA gene. Promoter binding may be inhibited partially by the small regulatory RNA StyR3, perhaps thereby ensuring a basal level of expression of RamA. This is Transcriptional regulator RamR from Salmonella typhimurium (strain LT2 / SGSC1412 / ATCC 700720).